The primary structure comprises 130 residues: Small ribosomal subunit protein uS9 (130 aa).

This sequence belongs to the universal ribosomal protein uS9 family.

This is Small ribosomal subunit protein uS9 from Bordetella pertussis (strain Tohama I / ATCC BAA-589 / NCTC 13251).